The chain runs to 182 residues: Sec-independent protein translocase protein TatB (182 aa).

Residues Met-1–Gly-21 form a helical membrane-spanning segment. 2 disordered regions span residues Gln-87–Glu-107 and Thr-121–Pro-182. Residues Ala-168 to Pro-182 show a composition bias toward low complexity.

The protein belongs to the TatB family. In terms of assembly, the Tat system comprises two distinct complexes: a TatABC complex, containing multiple copies of TatA, TatB and TatC subunits, and a separate TatA complex, containing only TatA subunits. Substrates initially bind to the TatABC complex, which probably triggers association of the separate TatA complex to form the active translocon.

Its subcellular location is the cell inner membrane. Its function is as follows. Part of the twin-arginine translocation (Tat) system that transports large folded proteins containing a characteristic twin-arginine motif in their signal peptide across membranes. Together with TatC, TatB is part of a receptor directly interacting with Tat signal peptides. TatB may form an oligomeric binding site that transiently accommodates folded Tat precursor proteins before their translocation. This chain is Sec-independent protein translocase protein TatB, found in Salmonella choleraesuis (strain SC-B67).